Consider the following 694-residue polypeptide: Phosphatase and actin regulator 4-A (694 aa).

Composition is skewed to basic and acidic residues over residues 1–13 and 46–72; these read MEDRSEEGGDHSE and SSDSFRETSEVLERKISTRKPREELIK. Disordered stretches follow at residues 1–29, 42–169, 192–403, 426–445, and 450–572; these read MEDRSEEGGDHSEMPSAPSTPPSKRKSKF, RKRK…QPLP, VNEV…HIRI, LFMQNDMGPSEEGTRVRSLP, and LLKV…QIRQ. Residues 55–80 form an RPEL 1 repeat; the sequence is EVLERKISTRKPREELIKRGLLVEVP. Over residues 240–267 the composition is skewed to polar residues; that stretch reads SISTSVTQESAVAGQKSDSSNRLQSSAP. The segment covering 300–317 has biased composition (low complexity); sequence AELSLALAGSPLSPAGSR. Composition is skewed to pro residues over residues 318–327 and 372–381; these read PSPPLPPKRA and SNPPVPPLTL. Acidic residues-rich tracts occupy residues 455 to 467, 499 to 511, and 519 to 529; these read DDEDDESLEDESL, QEEEEGGVSDTDS, and DDEEEEEEEET. RPEL repeat units follow at residues 576 to 601 and 613 to 638; these read TQLNRRLSQRPTAEELEQRNILQKNE and RRLTRKLSQRPTVAELVERKILRFNE.

This sequence belongs to the phosphatase and actin regulator family. Binds ppp1ca and actin.

It localises to the cytoplasm. The protein resides in the cell projection. Its subcellular location is the lamellipodium. Its function is as follows. Regulator of protein phosphatase 1 (PP1) required for neural tube and optic fissure closure, and enteric neural crest cell (ENCCs) migration during development. Acts as an activator of PP1. During neural tube closure, localizes to the ventral neural tube and activates PP1, leading to down-regulate cell proliferation within cranial neural tissue and the neural retina. Also acts as a regulator of migration of enteric neural crest cells (ENCCs) by activating PP1, leading to repression of the integrin signaling through the rho/rock pathway. The protein is Phosphatase and actin regulator 4-A (phactr4-a) of Xenopus laevis (African clawed frog).